The sequence spans 921 residues: GPI ethanolamine phosphate transferase 1 (921 aa).

At 1 to 9 (MKNNTRFTL) the chain is on the cytoplasmic side. A helical membrane pass occupies residues 10–30 (IVVGVLFHLLYLWSIFDIYFI). At 31–457 (SPLVHGMEQK…TTYNWRFIRT (427 aa)) the chain is on the lumenal side. Residues N90, N138, N198, N262, and N286 are each glycosylated (N-linked (GlcNAc...) asparagine). The helical transmembrane segment at 458 to 478 (IVTFGFLGWICYSFMIFLKLF) threads the bilayer. The Cytoplasmic portion of the chain corresponds to 479-488 (ILNNSQTTHP). The helical transmembrane segment at 489 to 509 (SILNISIFTSLGLILNYILFY) threads the bilayer. The Lumenal segment spans residues 510–516 (QKSPLNF). A helical membrane pass occupies residues 517–537 (YLYLIFPLFFWSKIFSNTAII). Over 538–552 (RDGVNEFFKGISKAE) the chain is Cytoplasmic. The chain crosses the membrane as a helical span at residues 553-573 (SVIIGLTIISIYEGIVYGFFH). The Lumenal segment spans residues 574–575 (RW). A helical membrane pass occupies residues 576–596 (ILSLILVSFAFYPLVCGVTDL). The Cytoplasmic portion of the chain corresponds to 597–599 (FTN). A helical membrane pass occupies residues 600 to 620 (LLWILTSVGLSSFTLLDAVKI). Position 621 (E621) is a topological domain, lumenal. A helical membrane pass occupies residues 622 to 642 (NLQQIQVAGILIVLSSAYAVM). Topologically, residues 643–654 (RLSQDISKYTQH) are cytoplasmic. The helical transmembrane segment at 655-675 (LLSIQIFLVSGMLHFTSKSVI) threads the bilayer. The Lumenal portion of the chain corresponds to 676-684 (SLQKREGLP). Residues 685–705 (AFAQVGGWAILVISLTIMPFL) form a helical membrane-spanning segment. The Cytoplasmic portion of the chain corresponds to 706–728 (HYLKPNNNYQVRLLTIYLTFAPS). The helical transmembrane segment at 729-749 (FIILSISFEALFYFIFTAYIV) threads the bilayer. Residues 750-777 (QWLQIEKNIKVLKDEQKSDSNGIQLLRV) lie on the Lumenal side of the membrane. The chain crosses the membrane as a helical span at residues 778–798 (AIIGFFLQQIAFFGTGNVASI). Over 799–819 (SSFSLDSVYRLLPVFDPFPMG) the chain is Cytoplasmic. The helical transmembrane segment at 820-840 (ALLMLKLIIPYVLLSCGLGIM) threads the bilayer. Residues 841-849 (NIQLDIKDY) lie on the Lumenal side of the membrane. A helical membrane pass occupies residues 850–870 (TISSLIISTSDILSLNFFYLL). At 871-878 (KTEGSWLD) the chain is on the cytoplasmic side. Residues 879–899 (IGVTISNYCLAILSSLFMLIL) form a helical membrane-spanning segment. The Lumenal portion of the chain corresponds to 900–921 (EIVGHQLLKNVTRATSSQKKTN). Residue N909 is glycosylated (N-linked (GlcNAc...) asparagine).

This sequence belongs to the PIGG/PIGN/PIGO family. PIGN subfamily.

It is found in the endoplasmic reticulum membrane. The protein operates within glycolipid biosynthesis; glycosylphosphatidylinositol-anchor biosynthesis. In terms of biological role, ethanolamine phosphate transferase involved in glycosylphosphatidylinositol-anchor biosynthesis. Transfers ethanolamine phosphate to the first alpha-1,4-linked mannose of the glycosylphosphatidylinositol precursor of GPI-anchor. This Candida glabrata (strain ATCC 2001 / BCRC 20586 / JCM 3761 / NBRC 0622 / NRRL Y-65 / CBS 138) (Yeast) protein is GPI ethanolamine phosphate transferase 1 (MCD4).